Reading from the N-terminus, the 285-residue chain is Proteasome subunit beta (285 aa).

A propeptide spans 1-50 (MTAEHPARLPQAFMTPGSSSFVDFLAAHDPSLLPSSRALPAGSAPPAPHG) (removed in mature form; by autocatalysis). The active-site Nucleophile is the Thr-51. A disordered region spans residues 266–285 (RTRQARSSRSRHGSLGGDLR).

This sequence belongs to the peptidase T1B family. In terms of assembly, the 20S proteasome core is composed of 14 alpha and 14 beta subunits that assemble into four stacked heptameric rings, resulting in a barrel-shaped structure. The two inner rings, each composed of seven catalytic beta subunits, are sandwiched by two outer rings, each composed of seven alpha subunits. The catalytic chamber with the active sites is on the inside of the barrel. Has a gated structure, the ends of the cylinder being occluded by the N-termini of the alpha-subunits. Is capped by the proteasome-associated ATPase, ARC.

The protein localises to the cytoplasm. The enzyme catalyses Cleavage of peptide bonds with very broad specificity.. Its pathway is protein degradation; proteasomal Pup-dependent pathway. With respect to regulation, the formation of the proteasomal ATPase ARC-20S proteasome complex, likely via the docking of the C-termini of ARC into the intersubunit pockets in the alpha-rings, may trigger opening of the gate for substrate entry. Interconversion between the open-gate and close-gate conformations leads to a dynamic regulation of the 20S proteasome proteolysis activity. In terms of biological role, component of the proteasome core, a large protease complex with broad specificity involved in protein degradation. The protein is Proteasome subunit beta of Sanguibacter keddieii (strain ATCC 51767 / DSM 10542 / NCFB 3025 / ST-74).